Here is a 213-residue protein sequence, read N- to C-terminus: Vacuolar protein sorting-associated protein 32 homolog 1 (213 aa).

Coiled coils occupy residues 11-42 (KQET…KKAT) and 118-176 (TNID…QLLQ). A disordered region spans residues 180-213 (IHVPQGNKPARAPAQKQPTAEEDELAALQAEMAL).

The protein belongs to the SNF7 family. Component of the endosomal sorting required for transport complex III (ESCRT-III), composed at least of VPS2, VPS20, VPS24 and VPS32. Interacts with SKD1. Interacts with BRO1/ALIX.

Its subcellular location is the endosome. In terms of biological role, component of the ESCRT-III complex, which is required for multivesicular bodies (MVBs) formation and sorting of endosomal cargo proteins into MVBs. The ESCRT-III complex is probably involved in the concentration of MVB cargo. The polypeptide is Vacuolar protein sorting-associated protein 32 homolog 1 (VPS32.1) (Arabidopsis thaliana (Mouse-ear cress)).